Consider the following 193-residue polypeptide: MEHDAALLSSSEIDRIGRRIGRPLVLVGMMGVGKTTVGRKLASLLHVPFVDADEEIERAAHMPIPEIFATYGEPYFRDGERRVIARLMGTGRNTDRKVLSTGGGAFCDPATRALILERGIAVWLDSDVDTLVERVGRKDNRPLLKTGNPREILTRLKDEREPFYAQAPIHMTSGAQPHQVTASKILRAIDQWL.

31 to 36 (GVGKTT) lines the ATP pocket. Residue threonine 35 participates in Mg(2+) binding. Positions 53, 77, and 103 each coordinate substrate. Arginine 141 lines the ATP pocket. Arginine 160 contacts substrate. Glutamine 176 serves as a coordination point for ATP.

This sequence belongs to the shikimate kinase family. In terms of assembly, monomer. Requires Mg(2+) as cofactor.

The protein localises to the cytoplasm. The enzyme catalyses shikimate + ATP = 3-phosphoshikimate + ADP + H(+). It participates in metabolic intermediate biosynthesis; chorismate biosynthesis; chorismate from D-erythrose 4-phosphate and phosphoenolpyruvate: step 5/7. Catalyzes the specific phosphorylation of the 3-hydroxyl group of shikimic acid using ATP as a cosubstrate. The sequence is that of Shikimate kinase from Novosphingobium aromaticivorans (strain ATCC 700278 / DSM 12444 / CCUG 56034 / CIP 105152 / NBRC 16084 / F199).